We begin with the raw amino-acid sequence, 231 residues long: Large ribosomal subunit protein uL1 (231 aa).

Belongs to the universal ribosomal protein uL1 family. Part of the 50S ribosomal subunit.

Its function is as follows. Binds directly to 23S rRNA. The L1 stalk is quite mobile in the ribosome, and is involved in E site tRNA release. In terms of biological role, protein L1 is also a translational repressor protein, it controls the translation of the L11 operon by binding to its mRNA. The protein is Large ribosomal subunit protein uL1 of Methylococcus capsulatus (strain ATCC 33009 / NCIMB 11132 / Bath).